The sequence spans 857 residues: DNA mismatch repair protein MutS (857 aa).

613 to 620 (GPNMGGKS) lines the ATP pocket. Positions 797–820 (TSLPHEQPAAHKAKDAPQVPHQSD) are disordered.

It belongs to the DNA mismatch repair MutS family.

Its function is as follows. This protein is involved in the repair of mismatches in DNA. It is possible that it carries out the mismatch recognition step. This protein has a weak ATPase activity. This chain is DNA mismatch repair protein MutS, found in Pseudomonas putida (strain ATCC 700007 / DSM 6899 / JCM 31910 / BCRC 17059 / LMG 24140 / F1).